We begin with the raw amino-acid sequence, 662 residues long: UvrABC system protein B (662 aa).

The Helicase ATP-binding domain occupies 25–182; that stretch reads KGIEKREKFQ…KKLVEIQYER (158 aa). 38–45 contributes to the ATP binding site; sequence GVTGSGKT. Positions 91 to 114 match the Beta-hairpin motif; the sequence is YYDYYQPEAYVAQSDTYIEKDASI. The 167-residue stretch at 429-595 folds into the Helicase C-terminal domain; the sequence is QIDDLYTSIQ…TIIKDIREVI (167 aa). Residues 622 to 657 enclose the UVR domain; it reads DKLIEKYEEEMKEAAQNLQFEKAAHLRDVIYKLKKD.

The protein belongs to the UvrB family. Forms a heterotetramer with UvrA during the search for lesions. Interacts with UvrC in an incision complex.

It is found in the cytoplasm. Its function is as follows. The UvrABC repair system catalyzes the recognition and processing of DNA lesions. A damage recognition complex composed of 2 UvrA and 2 UvrB subunits scans DNA for abnormalities. Upon binding of the UvrA(2)B(2) complex to a putative damaged site, the DNA wraps around one UvrB monomer. DNA wrap is dependent on ATP binding by UvrB and probably causes local melting of the DNA helix, facilitating insertion of UvrB beta-hairpin between the DNA strands. Then UvrB probes one DNA strand for the presence of a lesion. If a lesion is found the UvrA subunits dissociate and the UvrB-DNA preincision complex is formed. This complex is subsequently bound by UvrC and the second UvrB is released. If no lesion is found, the DNA wraps around the other UvrB subunit that will check the other stand for damage. The protein is UvrABC system protein B of Clostridium botulinum (strain Langeland / NCTC 10281 / Type F).